The following is a 216-amino-acid chain: MATLTPRQQQIYDLIRQTIQRTGFPPTRAEIAAEFGFSSPNAAEEHLRALARKGVIELTPGASRGIRLRAAGDTAQHQFSLPSMGLMQLTLPLVGRVAAGSPILAAEHIDRQYQVDPSLFSAQPDFLLKVRGMSMRDAGILDGDLLAVQRASEATNGKIVVARLGDDVTVKRFQRKGRHVELIAENPDFEPIHVDLDRDEFHLEGLAVGLIRPAAP.

The H-T-H motif DNA-binding region spans 28–48 (RAEIAAEFGFSSPNAAEEHLR). Catalysis depends on for autocatalytic cleavage activity residues Ser-134 and Lys-171.

The protein belongs to the peptidase S24 family. Homodimer.

It carries out the reaction Hydrolysis of Ala-|-Gly bond in repressor LexA.. In terms of biological role, represses a number of genes involved in the response to DNA damage (SOS response), including recA and lexA. In the presence of single-stranded DNA, RecA interacts with LexA causing an autocatalytic cleavage which disrupts the DNA-binding part of LexA, leading to derepression of the SOS regulon and eventually DNA repair. The polypeptide is LexA repressor (Ralstonia pickettii (strain 12J)).